The sequence spans 96 residues: C-C motif chemokine 1 (96 aa).

Residues 1–23 form the signal peptide; sequence MQIITTALVCLLLAGMWPEDVDS. 3 disulfides stabilise this stretch: Cys33–Cys57, Cys34–Cys73, and Cys49–Cys91. The N-linked (GlcNAc...) asparagine glycan is linked to Asn52.

It belongs to the intercrine beta (chemokine CC) family. In terms of assembly, monomer.

It is found in the secreted. In terms of biological role, cytokine that is chemotactic for monocytes but not for neutrophils. Binds to CCR8. The sequence is that of C-C motif chemokine 1 (CCL1) from Homo sapiens (Human).